A 229-amino-acid chain; its full sequence is NAD-dependent protein deacetylase (229 aa).

Residues 1–229 (MNKLNEALKK…SDAVKVFAEI (229 aa)) form the Deacetylase sirtuin-type domain. NAD(+) contacts are provided by Ala-20, Arg-32, Gln-96, Ile-98, Asp-99, His-114, Thr-181, Ser-182, Asn-205, and Val-223. Residues Ile-98 and Asp-99 each contribute to the nicotinamide site. Residue His-114 is the Proton acceptor of the active site.

It belongs to the sirtuin family. Class U subfamily.

It is found in the cytoplasm. It catalyses the reaction N(6)-acetyl-L-lysyl-[protein] + NAD(+) + H2O = 2''-O-acetyl-ADP-D-ribose + nicotinamide + L-lysyl-[protein]. NAD-dependent protein deacetylase which modulates the activities of several enzymes which are inactive in their acetylated form. The chain is NAD-dependent protein deacetylase from Listeria monocytogenes serotype 4b (strain F2365).